We begin with the raw amino-acid sequence, 278 residues long: Probable septum site-determining protein MinC (278 aa).

It belongs to the MinC family. In terms of assembly, interacts with MinD and FtsZ.

Its function is as follows. Cell division inhibitor that blocks the formation of polar Z ring septums. Rapidly oscillates between the poles of the cell to destabilize FtsZ filaments that have formed before they mature into polar Z rings. Prevents FtsZ polymerization. This chain is Probable septum site-determining protein MinC, found in Gloeobacter violaceus (strain ATCC 29082 / PCC 7421).